The primary structure comprises 430 residues: Tektin-2 (430 aa).

Coiled coils occupy residues 75–162 (KETL…FQHL) and 226–380 (KNRA…IACK).

It belongs to the tektin family. Microtubule inner protein component of sperm flagellar doublet microtubules. May interact with CCDC172. Ubiquitinated, leading to its degradation. Deubiquitinated by USP16, promoting its stability. Post-translationally, tyrosine phosphorylated. In terms of tissue distribution, expressed in the testes (at protein level).

It localises to the cytoplasm. The protein localises to the cytoskeleton. It is found in the cilium axoneme. Its subcellular location is the flagellum axoneme. The protein resides in the microtubule organizing center. In terms of biological role, microtubule inner protein (MIP) part of the dynein-decorated doublet microtubules (DMTs) in cilia and flagellar axoneme. Plays a key role in the assembly or attachment of the inner dynein arm to microtubules in sperm flagella and tracheal cilia. Forms filamentous polymers in the walls of ciliary and flagellar microtubules. The protein is Tektin-2 (Tekt2) of Mus musculus (Mouse).